Consider the following 689-residue polypeptide: Glycine--tRNA ligase beta subunit (689 aa).

The protein belongs to the class-II aminoacyl-tRNA synthetase family. Tetramer of two alpha and two beta subunits.

It localises to the cytoplasm. It catalyses the reaction tRNA(Gly) + glycine + ATP = glycyl-tRNA(Gly) + AMP + diphosphate. The sequence is that of Glycine--tRNA ligase beta subunit from Shigella dysenteriae serotype 1 (strain Sd197).